The sequence spans 198 residues: Recombination protein RecR (198 aa).

The C4-type zinc finger occupies 56–71; it reads CDTCGNVDTQNPCGIC. Positions 79 to 174 constitute a Toprim domain; that stretch reads KSICVVEDVA…RITQLAHGLP (96 aa).

It belongs to the RecR family.

May play a role in DNA repair. It seems to be involved in an RecBC-independent recombinational process of DNA repair. It may act with RecF and RecO. This is Recombination protein RecR from Erythrobacter litoralis (strain HTCC2594).